Reading from the N-terminus, the 203-residue chain is Large ribosomal subunit protein uL18 (203 aa).

The protein belongs to the universal ribosomal protein uL18 family. In terms of assembly, part of the 50S ribosomal subunit. Contacts the 5S and 23S rRNAs.

Functionally, this is one of the proteins that bind and probably mediate the attachment of the 5S RNA into the large ribosomal subunit, where it forms part of the central protuberance. The polypeptide is Large ribosomal subunit protein uL18 (Pyrococcus furiosus (strain ATCC 43587 / DSM 3638 / JCM 8422 / Vc1)).